Here is a 221-residue protein sequence, read N- to C-terminus: Glutathione peroxidase (221 aa).

An N-terminal signal peptide occupies residues Met-1–Thr-19. Asn-28 is a glycosylation site (N-linked (GlcNAc...) asparagine). Cys-72 is a catalytic residue. Residues Asn-87 and Asn-90 are each glycosylated (N-linked (GlcNAc...) asparagine).

It belongs to the glutathione peroxidase family. In terms of assembly, homotetramer.

The protein resides in the secreted. It is found in the extracellular space. The enzyme catalyses 2 glutathione + H2O2 = glutathione disulfide + 2 H2O. The sequence is that of Glutathione peroxidase from Dirofilaria immitis (Canine heartworm).